We begin with the raw amino-acid sequence, 83 residues long: Small ribosomal subunit protein bS20 (83 aa).

The tract at residues 1 to 21 (MPNIKSAIKRVRTTETAEERN) is disordered. Basic and acidic residues predominate over residues 12-21 (RTTETAEERN).

This sequence belongs to the bacterial ribosomal protein bS20 family.

Binds directly to 16S ribosomal RNA. The protein is Small ribosomal subunit protein bS20 of Staphylococcus epidermidis (strain ATCC 35984 / DSM 28319 / BCRC 17069 / CCUG 31568 / BM 3577 / RP62A).